Reading from the N-terminus, the 154-residue chain is Deoxyuridine 5'-triphosphate nucleotidohydrolase (154 aa).

Residues 64–66 (RSG), N77, 81–83 (TVD), and K91 each bind substrate.

It belongs to the dUTPase family. In terms of assembly, homotrimer. Mg(2+) serves as cofactor.

The enzyme catalyses dUTP + H2O = dUMP + diphosphate + H(+). The protein operates within pyrimidine metabolism; dUMP biosynthesis; dUMP from dCTP (dUTP route): step 2/2. Functionally, this enzyme is involved in nucleotide metabolism: it produces dUMP, the immediate precursor of thymidine nucleotides and it decreases the intracellular concentration of dUTP so that uracil cannot be incorporated into DNA. The sequence is that of Deoxyuridine 5'-triphosphate nucleotidohydrolase from Mycobacterium leprae (strain Br4923).